A 345-amino-acid polypeptide reads, in one-letter code: Probable 3'(2'),5'-bisphosphate nucleotidase 4 (345 aa).

Aspartate 46 acts as the Proton acceptor in catalysis. Residues glutamate 71, aspartate 134, valine 136, and aspartate 137 each contribute to the Mg(2+) site. Threonine 139 serves as the catalytic Proton acceptor. Positions 139, 247, 250, and 264 each coordinate adenosine 3',5'-bisphosphate. Residues serine 247, lysine 250, and arginine 264 each coordinate AMP.

The protein belongs to the inositol monophosphatase superfamily. Requires Mg(2+) as cofactor.

The enzyme catalyses 3'-phosphoadenylyl sulfate + H2O = adenosine 5'-phosphosulfate + phosphate. It catalyses the reaction adenosine 3',5'-bisphosphate + H2O = AMP + phosphate. The catalysed reaction is adenosine 2',5'-bisphosphate + H2O = AMP + phosphate. It carries out the reaction 1D-myo-inositol 1,4-bisphosphate + H2O = 1D-myo-inositol 4-phosphate + phosphate. The enzyme catalyses 1D-myo-inositol 1,3,4-trisphosphate + H2O = 1D-myo-inositol 3,4-bisphosphate + phosphate. It functions in the pathway signal transduction; phosphatidylinositol signaling pathway. In terms of biological role, phosphatase that converts adenosine 3'-phosphate 5'-phosphosulfate (PAPS) to adenosine 5'-phosphosulfate (APS) and 3'(2')-phosphoadenosine 5'-phosphate (PAP) to AMP. Is also able to hydrolyze inositol 1,4-bisphosphate and inositol 1,3,4-trisphosphate. The protein is Probable 3'(2'),5'-bisphosphate nucleotidase 4 (SAL4) of Arabidopsis thaliana (Mouse-ear cress).